A 165-amino-acid polypeptide reads, in one-letter code: NADPH-dependent 7-cyano-7-deazaguanine reductase (165 aa).

The active-site Thioimide intermediate is the C56. Residue D63 is the Proton donor of the active site. Substrate contacts are provided by residues 78 to 80 (VES) and 97 to 98 (HE).

This sequence belongs to the GTP cyclohydrolase I family. QueF type 1 subfamily.

Its subcellular location is the cytoplasm. The catalysed reaction is 7-aminomethyl-7-carbaguanine + 2 NADP(+) = 7-cyano-7-deazaguanine + 2 NADPH + 3 H(+). It participates in tRNA modification; tRNA-queuosine biosynthesis. Is totally inhibited by 4-aminobenzylcyanide in vitro. In terms of biological role, catalyzes the NADPH-dependent reduction of 7-cyano-7-deazaguanine (preQ0) to 7-aminomethyl-7-deazaguanine (preQ1), a late step in the queuosine pathway. Is highly specific for its natural substrate preQ0, since it cannot use various aliphatic, aromatic and heterocyclic nitriles, although it can reduce the substrate analog 5-cyanopyrrolo[2,3-d]pyrimidin-4-one with lesser efficiency. This is NADPH-dependent 7-cyano-7-deazaguanine reductase from Geobacillus kaustophilus (strain HTA426).